Here is a 132-residue protein sequence, read N- to C-terminus: Phosphomevalonate dehydratase small subunit (132 aa).

The active-site Proton acceptor is Ser-58.

This sequence belongs to the AcnX type II small subunit family. Heterodimer composed of a large subunit (PMDh-L) and a small subunit (PMDh-S).

The catalysed reaction is (R)-5-phosphomevalonate = (2E)-3-methyl-5-phosphooxypent-2-enoate + H2O. It functions in the pathway isoprenoid biosynthesis; isopentenyl diphosphate biosynthesis via mevalonate pathway. Its activity is regulated as follows. Neither the addition of 1 mM Mg(2+) nor 1 mM Mn(2+) has a significant effect on the activity, whereas Zn(2+) causes almost complete inactivation. Strongly inhibited by H(2)O(2), but not by EDTA or iodoacetamide. In terms of biological role, component of a hydro-lyase that catalyzes the dehydration of mevalonate 5-phosphate (MVA5P) to form trans-anhydromevalonate 5-phosphate (tAHMP). Involved in the archaeal mevalonate (MVA) pathway, which provides fundamental precursors for isoprenoid biosynthesis, such as isopentenyl diphosphate (IPP) and dimethylallyl diphosphate (DMAPP). The chain is Phosphomevalonate dehydratase small subunit from Aeropyrum pernix (strain ATCC 700893 / DSM 11879 / JCM 9820 / NBRC 100138 / K1).